The sequence spans 249 residues: Pyridoxine 5'-phosphate synthase (249 aa).

Asparagine 7 provides a ligand contact to 3-amino-2-oxopropyl phosphate. Position 9–10 (9–10 (DH)) interacts with 1-deoxy-D-xylulose 5-phosphate. Arginine 18 serves as a coordination point for 3-amino-2-oxopropyl phosphate. Residue histidine 43 is the Proton acceptor of the active site. 1-deoxy-D-xylulose 5-phosphate contacts are provided by arginine 45 and histidine 50. Glutamate 70 (proton acceptor) is an active-site residue. Threonine 100 contacts 1-deoxy-D-xylulose 5-phosphate. The active-site Proton donor is the histidine 198. 3-amino-2-oxopropyl phosphate-binding positions include alanine 199 and 220–221 (GH).

This sequence belongs to the PNP synthase family. As to quaternary structure, homooctamer; tetramer of dimers.

It is found in the cytoplasm. It carries out the reaction 3-amino-2-oxopropyl phosphate + 1-deoxy-D-xylulose 5-phosphate = pyridoxine 5'-phosphate + phosphate + 2 H2O + H(+). It participates in cofactor biosynthesis; pyridoxine 5'-phosphate biosynthesis; pyridoxine 5'-phosphate from D-erythrose 4-phosphate: step 5/5. In terms of biological role, catalyzes the complicated ring closure reaction between the two acyclic compounds 1-deoxy-D-xylulose-5-phosphate (DXP) and 3-amino-2-oxopropyl phosphate (1-amino-acetone-3-phosphate or AAP) to form pyridoxine 5'-phosphate (PNP) and inorganic phosphate. In Azoarcus sp. (strain BH72), this protein is Pyridoxine 5'-phosphate synthase.